The chain runs to 238 residues: Survival of motor neuron-related-splicing factor 30 (238 aa).

The region spanning 72 to 132 is the Tudor domain; sequence SWKVGDKCMA…KPVEEGRKAK (61 aa). A Nuclear localization signal motif is present at residues 142–160; the sequence is KKEMIAQQREYKKKKALKK. Residue S201 is modified to Phosphoserine. The residue at position 219 (K219) is an N6-acetyllysine.

Belongs to the SMN family. Associates with spliceosomes. Associates with U4/U5/U6 tri-snRNP and with U2 snRNP.

Its subcellular location is the nucleus speckle. It localises to the nucleus. It is found in the cajal body. Functionally, involved in spliceosome assembly. In Pongo abelii (Sumatran orangutan), this protein is Survival of motor neuron-related-splicing factor 30 (SMNDC1).